Consider the following 247-residue polypeptide: ATP synthase subunit a, chloroplastic (247 aa).

5 consecutive transmembrane segments (helical) span residues glutamine 38–valine 58, valine 95–leucine 115, isoleucine 134–serine 154, leucine 199–leucine 219, and glycine 220–glycine 240.

This sequence belongs to the ATPase A chain family. As to quaternary structure, F-type ATPases have 2 components, CF(1) - the catalytic core - and CF(0) - the membrane proton channel. CF(1) has five subunits: alpha(3), beta(3), gamma(1), delta(1), epsilon(1). CF(0) has four main subunits: a, b, b' and c.

It is found in the plastid. The protein localises to the chloroplast thylakoid membrane. In terms of biological role, key component of the proton channel; it plays a direct role in the translocation of protons across the membrane. The chain is ATP synthase subunit a, chloroplastic from Brachypodium distachyon (Purple false brome).